We begin with the raw amino-acid sequence, 169 residues long: Large ribosomal subunit protein uL5 (169 aa).

It belongs to the universal ribosomal protein uL5 family. In terms of assembly, part of the 50S ribosomal subunit; contacts the 5S rRNA and probably tRNA. Forms a bridge to the 30S subunit in the 70S ribosome.

This is one of the proteins that bind and probably mediate the attachment of the 5S RNA into the large ribosomal subunit, where it forms part of the central protuberance. In the 70S ribosome it contacts protein S13 of the 30S subunit (bridge B1b), connecting the 2 subunits; this bridge is implicated in subunit movement. May contact the P site tRNA; the 5S rRNA and some of its associated proteins might help stabilize positioning of ribosome-bound tRNAs. The chain is Large ribosomal subunit protein uL5 from Methanosarcina mazei (strain ATCC BAA-159 / DSM 3647 / Goe1 / Go1 / JCM 11833 / OCM 88) (Methanosarcina frisia).